The following is a 671-amino-acid chain: UvrABC system protein C (671 aa).

A disordered region spans residues 1–20 (MPHLPDSMSPEAPAGPAPAT). The segment covering 10-20 (PEAPAGPAPAT) has biased composition (low complexity). The GIY-YIG domain occupies 37-115 (PLPGVYRYFD…IKTLNPKYNI (79 aa)). Residues 232–267 (RQVMEALEARMMAHAEKLEFEQAAELRNQVAALSNV) enclose the UVR domain.

This sequence belongs to the UvrC family. As to quaternary structure, interacts with UvrB in an incision complex.

Its subcellular location is the cytoplasm. Functionally, the UvrABC repair system catalyzes the recognition and processing of DNA lesions. UvrC both incises the 5' and 3' sides of the lesion. The N-terminal half is responsible for the 3' incision and the C-terminal half is responsible for the 5' incision. In Albidiferax ferrireducens (strain ATCC BAA-621 / DSM 15236 / T118) (Rhodoferax ferrireducens), this protein is UvrABC system protein C.